The sequence spans 117 residues: Zinc metalloproteinase/disintegrin (117 aa).

The Disintegrin domain occupies 36 to 117 (TPVSGNELLE…AGCPRNPFHA (82 aa)). 6 disulfides stabilise this stretch: Cys50–Cys65, Cys52–Cys60, Cys59–Cys82, Cys73–Cys79, Cys78–Cys103, and Cys91–Cys110. Positions 95-97 (RGD) match the Cell attachment site motif.

It belongs to the venom metalloproteinase (M12B) family. P-II subfamily. P-IIa sub-subfamily. Monomer. Zn(2+) serves as cofactor. Expressed by the venom gland.

Its subcellular location is the secreted. Functionally, impairs hemostasis in the envenomed animal. Inhibits platelet aggregation and bone resorption. The polypeptide is Zinc metalloproteinase/disintegrin (Gloydius halys (Chinese water mocassin)).